The sequence spans 351 residues: Methionine import ATP-binding protein MetN (351 aa).

One can recognise an ABC transporter domain in the interval 4–249 (VQLDHVSVTF…PKAELTQKFV (246 aa)). 41-48 (GFSGAGKS) contacts ATP.

Belongs to the ABC transporter superfamily. Methionine importer (TC 3.A.1.24) family. As to quaternary structure, the complex is composed of two ATP-binding proteins (MetN), two transmembrane proteins (MetI) and a solute-binding protein (MetQ).

Its subcellular location is the cell membrane. The enzyme catalyses L-methionine(out) + ATP + H2O = L-methionine(in) + ADP + phosphate + H(+). The catalysed reaction is D-methionine(out) + ATP + H2O = D-methionine(in) + ADP + phosphate + H(+). Its function is as follows. Part of the ABC transporter complex MetNIQ involved in methionine import. Responsible for energy coupling to the transport system. This is Methionine import ATP-binding protein MetN from Lactobacillus delbrueckii subsp. bulgaricus (strain ATCC BAA-365 / Lb-18).